We begin with the raw amino-acid sequence, 451 residues long: MAANVPPSAETLLSGAAAHPPKTAEEIANQYDLLPKLIPFLDRHLVFPLLEFSSGQDDDKEIVRAKYELLKHTNMTDYVANLWQEINNSDTIPDEFVKKREEVLAKLQHYQEESAKITELLQDEDVVGNLRSDKVANLKFLEEQHGVTPEMVNSLFDYGRFQYSCGSYGNAAELLYQFRVLSTDNDKVASATWGKLASEILTTSWEAAMEEVQKAKESIETRLFNNPLGQLQNRSWLIHWSLFPFFNYDPARDVLTDLFFSPAYINTIQTHCPWILRYLAAAVITNRGRAHKSSSLYQKQLKDLIRVVRQEGYEYSDPITDFVKALYIDFDFEEAQKKLGEAEDVLRSDFFLVSAADAFVEAARHLISESYCKIHQRIDIKDLSTRLGLNQDEGEKWIVNLIRDTRVDAKIDYKEGTVIMNHPPQSVYQQVIEKTKGAFFRTQVLSAAVAK.

One can recognise a PCI domain in the interval 256 to 425; sequence TDLFFSPAYI…GTVIMNHPPQ (170 aa).

Belongs to the eIF-3 subunit E family. In terms of assembly, component of the eukaryotic translation initiation factor 3 (eIF-3) complex.

It is found in the cytoplasm. Its function is as follows. Component of the eukaryotic translation initiation factor 3 (eIF-3) complex, which is involved in protein synthesis of a specialized repertoire of mRNAs and, together with other initiation factors, stimulates binding of mRNA and methionyl-tRNAi to the 40S ribosome. The eIF-3 complex specifically targets and initiates translation of a subset of mRNAs involved in cell proliferation. The chain is Eukaryotic translation initiation factor 3 subunit E (int6) from Aspergillus oryzae (strain ATCC 42149 / RIB 40) (Yellow koji mold).